The chain runs to 230 residues: AA9 family lytic polysaccharide monooxygenase H (230 aa).

Positions 1-17 (MKTLSAGLLALASAASA) are cleaved as a signal peptide. Cu(2+) is bound by residues His-18 and His-89. A disulfide bridge connects residues Cys-59 and Cys-178. Positions 164 and 173 each coordinate O2. Residue Tyr-175 participates in Cu(2+) binding.

It belongs to the polysaccharide monooxygenase AA9 family. The cofactor is Cu(2+).

The protein localises to the secreted. It carries out the reaction [(1-&gt;4)-beta-D-glucosyl]n+m + reduced acceptor + O2 = 4-dehydro-beta-D-glucosyl-[(1-&gt;4)-beta-D-glucosyl]n-1 + [(1-&gt;4)-beta-D-glucosyl]m + acceptor + H2O.. Functionally, lytic polysaccharide monooxygenase (LPMO) that depolymerizes crystalline and amorphous polysaccharides via the oxidation of scissile alpha- or beta-(1-4)-glycosidic bonds, yielding primarly C1 oxidation products. Catalysis by LPMOs requires the reduction of the active-site copper from Cu(II) to Cu(I) by a reducing agent and H(2)O(2) or O(2) as a cosubstrate. Active on hemicelluloses, including xylan, glucomannan, and xyloglucan. Preferentially cleaves residual xylan in phosphoric acid-swollen cellulose (PASC). Moreover, when exposed to cellulose-xylan blends, shows a preference for xylan and for releasing oxidized xylooligosaccharides. Has no activity on ivory nut mannan (INM), a linear beta-1,4-linked mannan without substitutions. The sequence is that of AA9 family lytic polysaccharide monooxygenase H from Malbranchea cinnamomea (Thermophilic fungus).